The primary structure comprises 335 residues: Biotin synthase (335 aa).

The interval 1-20 (MVSVGTQSHSGRDQAEQNPS) is disordered. A Radical SAM core domain is found at 59-284 (GHLQKSSLLS…MMPQSMVRLS (226 aa)). 3 residues coordinate [4Fe-4S] cluster: cysteine 74, cysteine 78, and cysteine 81. 4 residues coordinate [2Fe-2S] cluster: cysteine 118, cysteine 150, cysteine 210, and arginine 282.

The protein belongs to the radical SAM superfamily. Biotin synthase family. Homodimer. It depends on [4Fe-4S] cluster as a cofactor. The cofactor is [2Fe-2S] cluster.

It carries out the reaction (4R,5S)-dethiobiotin + (sulfur carrier)-SH + 2 reduced [2Fe-2S]-[ferredoxin] + 2 S-adenosyl-L-methionine = (sulfur carrier)-H + biotin + 2 5'-deoxyadenosine + 2 L-methionine + 2 oxidized [2Fe-2S]-[ferredoxin]. It functions in the pathway cofactor biosynthesis; biotin biosynthesis; biotin from 7,8-diaminononanoate: step 2/2. Catalyzes the conversion of dethiobiotin (DTB) to biotin by the insertion of a sulfur atom into dethiobiotin via a radical-based mechanism. The polypeptide is Biotin synthase (Zymomonas mobilis subsp. mobilis (strain ATCC 31821 / ZM4 / CP4)).